The chain runs to 475 residues: ISWI one complex protein 4 (475 aa).

A Phosphoserine modification is found at Ser-2. Phosphothreonine is present on Thr-9. 3 disordered regions span residues 42–84 (VSVH…DFGE), 181–296 (EEEY…IKYH), and 454–475 (EMDREKPSFSEDVKEEESKVGA). Phosphoserine is present on residues Ser-65 and Ser-73. Acidic residues-rich tracts occupy residues 72 to 84 (QSEEEEDIEDFGE), 181 to 193 (EEEYVEEEEEENE), and 241 to 252 (ASEEEEEEEEEK). Residue Ser-242 is modified to Phosphoserine. Residues 259-294 (KRPQRTKTKKVVVSKTKPNPKTKAKKEKPKPPKPIK) show a composition bias toward basic residues. A compositionally biased stretch (basic and acidic residues) spans 456-475 (DREKPSFSEDVKEEESKVGA).

Component of the ISW1B complex, which at least consists of ISW1, IOC2 and IOC4.

It localises to the nucleus. Functionally, functions as a component of the ISW1B complex, which acts in remodeling the chromatin by catalyzing an ATP-dependent alteration in the structure of nucleosomal DNA. The ISW1B complex acts within coding regions to control the amount of RNA polymerase II released into productive elongation and to coordinate elongation with termination and pre-mRNA processing. This is ISWI one complex protein 4 (IOC4) from Saccharomyces cerevisiae (strain ATCC 204508 / S288c) (Baker's yeast).